The sequence spans 37 residues: Large ribosomal subunit protein bL36 (37 aa).

The protein belongs to the bacterial ribosomal protein bL36 family.

This chain is Large ribosomal subunit protein bL36, found in Azoarcus sp. (strain BH72).